Reading from the N-terminus, the 285-residue chain is Ribonuclease H1 (285 aa).

Positions 72-122 (RSSSSPDGSKGQESAHVQKLQVKTSKRPREPLGEEEEPPEPGAKHTRQDTE) are disordered. The 147-residue stretch at 135-281 (MGESVVVYTD…ADRLAREGAK (147 aa)) folds into the RNase H type-1 domain. 4 residues coordinate Mg(2+): D144, E185, D209, and D273.

It belongs to the RNase H family. As to quaternary structure, monomer. The cofactor is Mg(2+).

It localises to the cytoplasm. It catalyses the reaction Endonucleolytic cleavage to 5'-phosphomonoester.. In the presence of magnesium, manganese is inhibitory. Its function is as follows. Endonuclease that specifically degrades the RNA of RNA-DNA hybrids. Plays a role in RNA polymerase II (RNAp II) transcription termination by degrading R-loop RNA-DNA hybrid formation at G-rich pause sites located downstream of the poly(A) site and behind the elongating RNAp II. This is Ribonuclease H1 (Rnaseh1) from Rattus norvegicus (Rat).